Here is a 299-residue protein sequence, read N- to C-terminus: Probable endonuclease 4 (299 aa).

His-68, His-110, Glu-145, Asp-179, His-182, His-214, Asp-227, His-229, and Glu-259 together coordinate Zn(2+).

It belongs to the AP endonuclease 2 family. Requires Zn(2+) as cofactor.

The enzyme catalyses Endonucleolytic cleavage to 5'-phosphooligonucleotide end-products.. Its function is as follows. Endonuclease IV plays a role in DNA repair. It cleaves phosphodiester bonds at apurinic or apyrimidinic (AP) sites, generating a 3'-hydroxyl group and a 5'-terminal sugar phosphate. The polypeptide is Probable endonuclease 4 (Exiguobacterium sibiricum (strain DSM 17290 / CCUG 55495 / CIP 109462 / JCM 13490 / 255-15)).